We begin with the raw amino-acid sequence, 333 residues long: Ferrochelatase (333 aa).

2 residues coordinate Fe cation: His202 and Glu284.

The protein belongs to the ferrochelatase family.

The protein resides in the cytoplasm. It carries out the reaction heme b + 2 H(+) = protoporphyrin IX + Fe(2+). It functions in the pathway porphyrin-containing compound metabolism; protoheme biosynthesis; protoheme from protoporphyrin-IX: step 1/1. Its function is as follows. Catalyzes the ferrous insertion into protoporphyrin IX. The sequence is that of Ferrochelatase from Francisella tularensis subsp. mediasiatica (strain FSC147).